A 102-amino-acid chain; its full sequence is MHVKKGDKVKVITGKDKGKEGVILAAFPKQDRVLVEGVNIVKKHVKPNQLNPQGGIVSQEAAIHVSNVMLIDPKSGEPTRVGYKIENGKKVRVAKKSGAVID.

This sequence belongs to the universal ribosomal protein uL24 family. Part of the 50S ribosomal subunit.

One of two assembly initiator proteins, it binds directly to the 5'-end of the 23S rRNA, where it nucleates assembly of the 50S subunit. Its function is as follows. One of the proteins that surrounds the polypeptide exit tunnel on the outside of the subunit. This chain is Large ribosomal subunit protein uL24, found in Lysinibacillus sphaericus (strain C3-41).